Reading from the N-terminus, the 587-residue chain is Glutamine--tRNA ligase (587 aa).

The 'HIGH' region motif lies at 58–68; that stretch reads PEPNGYLHIGH. Residues 59 to 61 and 65 to 71 each bind ATP; these read EPN and HIGHAKS. Residues D91 and Y240 each contribute to the L-glutamine site. ATP-binding positions include T259 and 294–295; that span reads RL. The short motif at 301–305 is the 'KMSKS' region element; the sequence is VTSKR.

This sequence belongs to the class-I aminoacyl-tRNA synthetase family. Monomer.

The protein localises to the cytoplasm. The enzyme catalyses tRNA(Gln) + L-glutamine + ATP = L-glutaminyl-tRNA(Gln) + AMP + diphosphate. In Bordetella bronchiseptica (strain ATCC BAA-588 / NCTC 13252 / RB50) (Alcaligenes bronchisepticus), this protein is Glutamine--tRNA ligase.